The primary structure comprises 105 residues: Early E3A 12.1 kDa protein (105 aa).

Belongs to the adenoviridae E3A-2 family.

Not yet known. The polypeptide is Early E3A 12.1 kDa protein (Human adenovirus A serotype 12 (HAdV-12)).